The primary structure comprises 568 residues: 2-succinyl-5-enolpyruvyl-6-hydroxy-3-cyclohexene-1-carboxylate synthase (568 aa).

Belongs to the TPP enzyme family. MenD subfamily. Homodimer. Mg(2+) is required as a cofactor. Requires Mn(2+) as cofactor. Thiamine diphosphate serves as cofactor.

It catalyses the reaction isochorismate + 2-oxoglutarate + H(+) = 5-enolpyruvoyl-6-hydroxy-2-succinyl-cyclohex-3-ene-1-carboxylate + CO2. It participates in quinol/quinone metabolism; 1,4-dihydroxy-2-naphthoate biosynthesis; 1,4-dihydroxy-2-naphthoate from chorismate: step 2/7. It functions in the pathway cofactor biosynthesis; phylloquinone biosynthesis. Catalyzes the thiamine diphosphate-dependent decarboxylation of 2-oxoglutarate and the subsequent addition of the resulting succinic semialdehyde-thiamine pyrophosphate anion to isochorismate to yield 2-succinyl-5-enolpyruvyl-6-hydroxy-3-cyclohexene-1-carboxylate (SEPHCHC). The protein is 2-succinyl-5-enolpyruvyl-6-hydroxy-3-cyclohexene-1-carboxylate synthase of Synechococcus sp. (strain CC9902).